The primary structure comprises 438 residues: ATP-dependent RNA helicase RhlB (438 aa).

The Q motif motif lies at 9 to 37 (QRFADLPLHPEVKQALAENGFEFCTPIQA). Positions 40–219 (LPVLLQSKDI…YDHMNEPVKV (180 aa)) constitute a Helicase ATP-binding domain. 53 to 60 (AQTGTGKT) contributes to the ATP binding site. The DEAD box motif lies at 165–168 (DEAD). In terms of domain architecture, Helicase C-terminal spans 243–390 (KMRLLLTLIE…VSNYDSEALL (148 aa)). Residues 395–438 (TPAKIHRKHPSGTRNLRDRSGTSRPGAQRSGARPPRHDRTRRHS) form a disordered region. Over residues 428–438 (PPRHDRTRRHS) the composition is skewed to basic residues.

The protein belongs to the DEAD box helicase family. RhlB subfamily. Component of the RNA degradosome, which is a multiprotein complex involved in RNA processing and mRNA degradation.

The protein resides in the cytoplasm. The catalysed reaction is ATP + H2O = ADP + phosphate + H(+). Functionally, DEAD-box RNA helicase involved in RNA degradation. Has RNA-dependent ATPase activity and unwinds double-stranded RNA. This chain is ATP-dependent RNA helicase RhlB, found in Shewanella baltica (strain OS223).